A 348-amino-acid chain; its full sequence is Phospho-2-dehydro-3-deoxyheptonate aldolase, Trp-sensitive (348 aa).

The protein belongs to the class-I DAHP synthase family.

The enzyme catalyses D-erythrose 4-phosphate + phosphoenolpyruvate + H2O = 7-phospho-2-dehydro-3-deoxy-D-arabino-heptonate + phosphate. The protein operates within metabolic intermediate biosynthesis; chorismate biosynthesis; chorismate from D-erythrose 4-phosphate and phosphoenolpyruvate: step 1/7. Stereospecific condensation of phosphoenolpyruvate (PEP) and D-erythrose-4-phosphate (E4P) giving rise to 3-deoxy-D-arabino-heptulosonate-7-phosphate (DAHP). The sequence is that of Phospho-2-dehydro-3-deoxyheptonate aldolase, Trp-sensitive (aroH) from Buchnera aphidicola subsp. Acyrthosiphon pisum (strain APS) (Acyrthosiphon pisum symbiotic bacterium).